A 163-amino-acid chain; its full sequence is C-type lectin lectoxin-Lio1 (163 aa).

The first 21 residues, 1-21, serve as a signal peptide directing secretion; the sequence is MERFIFAALLVVALSLSGTGA. Disulfide bonds link Cys25-Cys36, Cys53-Cys152, and Cys127-Cys144. The region spanning 32–153 is the C-type lectin domain; the sequence is SDGYCYKVFK…CRSKRYFICK (122 aa). The Mannose-binding motif lies at 117–119; it reads EPN. Residues Glu125 and Asp141 each coordinate Ca(2+).

This sequence belongs to the true venom lectin family. Expressed by the venom gland.

The protein localises to the secreted. In terms of biological role, mannose-binding lectin which recognizes specific carbohydrate structures and agglutinates a variety of animal cells by binding to cell-surface glycoproteins and glycolipids. May be a calcium-dependent lectin. In Erythrolamprus poecilogyrus (Water snake), this protein is C-type lectin lectoxin-Lio1.